Reading from the N-terminus, the 585-residue chain is Frizzled-5 (585 aa).

The signal sequence occupies residues 1–26 (MARPDPSAPPSLLLLLLAQLVGRAAA). The Extracellular segment spans residues 27–238 (ASKAPVCQEI…PDERTFATFW (212 aa)). Positions 28–150 (SKAPVCQEIT…GDAEVLCMDY (123 aa)) constitute an FZ domain. Disulfide bonds link Cys33-Cys94, Cys41-Cys87, Cys78-Cys116, Cys105-Cys147, and Cys109-Cys133. N-linked (GlcNAc...) asparagine glycosylation is present at Asn47. N-linked (GlcNAc...) asparagine glycosylation is present at Asn151. The disordered stretch occupies residues 156–182 (TTASPKSFPAKPTLPGPPGAPSSGGEC). Residues 239-259 (IGLWSVLCFISTSTTVATFLI) traverse the membrane as a helical segment. Residues 260–270 (DMERFRYPERP) lie on the Cytoplasmic side of the membrane. A helical membrane pass occupies residues 271–291 (IIFLSACYLCVSLGFLVRLVV). The Extracellular portion of the chain corresponds to 292–315 (GHASVACSREHSHIHYETTGPALC). Residues 316–336 (TVVFLLVYFFGMASSIWWVIL) form a helical membrane-spanning segment. Over 337-358 (SLTWFLAAGMKWGNEAIAGYAQ) the chain is Cytoplasmic. Residues 359 to 379 (YFHLAAWLIPSVKSITALALS) form a helical membrane-spanning segment. Residues 380–402 (SVDGDPVAGICYVGNQNLNSLRG) are Extracellular-facing. Residues 403–423 (FVLGPLVLYLLVGTLFLLAGF) form a helical membrane-spanning segment. Topologically, residues 424–449 (VSLFRIRSVIKQGGTKTDKLEKLMIR) are cytoplasmic. Residues 450 to 470 (IGIFTLLYTVPASIVVACYLY) form a helical membrane-spanning segment. At 471-500 (EQHYRESWEAALTCACPGPDAGQPRAKPEY) the chain is on the extracellular side. The helical transmembrane segment at 501 to 521 (WVLMLKYFMCLVVGITSGVWI) threads the bilayer. At 522–585 (WSGKTLESWR…YHKQVSLSHV (64 aa)) the chain is on the cytoplasmic side. The short motif at 582-584 (LSH) is the PDZ-binding element.

Belongs to the G-protein coupled receptor Fz/Smo family. In terms of assembly, binding of unsaturated fatty acid molecules (via FZ domain) promotes homodimerization (via FZ domain). Interacts with WNT2B. Interacts with WNT7A. Interacts with GOPC. Post-translationally, ubiquitinated by RNF43 and ZNRF3, leading to its degradation by the proteasome. In terms of tissue distribution, detected in hippocampus (at protein level). Expressed in eye, kidney, lung, chondrocytes, epithelial cells of the small intestine and gobelet cells of the colon.

It is found in the cell membrane. Its subcellular location is the golgi apparatus membrane. The protein resides in the synapse. It localises to the perikaryon. The protein localises to the cell projection. It is found in the dendrite. Its subcellular location is the axon. Its function is as follows. Receptor for Wnt proteins. Functions in the canonical Wnt/beta-catenin signaling pathway. In vitro activates WNT2, WNT10B, WNT5A, but not WNT2B or WNT4 signaling. In neurons, activation by WNT7A promotes formation of synapses. May be involved in transduction and intercellular transmission of polarity information during tissue morphogenesis and/or in differentiated tissues. Plays a role in yolk sac angiogenesis and in placental vascularization. Plays a role in ocular development. The sequence is that of Frizzled-5 (Fzd5) from Mus musculus (Mouse).